Here is a 464-residue protein sequence, read N- to C-terminus: Glucose-6-phosphate isomerase (464 aa).

Residue Glu290 is the Proton donor of the active site. Residues His319 and Lys433 contribute to the active site.

The protein belongs to the GPI family.

It localises to the cytoplasm. The enzyme catalyses alpha-D-glucose 6-phosphate = beta-D-fructose 6-phosphate. It participates in carbohydrate biosynthesis; gluconeogenesis. It functions in the pathway carbohydrate degradation; glycolysis; D-glyceraldehyde 3-phosphate and glycerone phosphate from D-glucose: step 2/4. Functionally, catalyzes the reversible isomerization of glucose-6-phosphate to fructose-6-phosphate. This is Glucose-6-phosphate isomerase from Carboxydothermus hydrogenoformans (strain ATCC BAA-161 / DSM 6008 / Z-2901).